A 506-amino-acid polypeptide reads, in one-letter code: NAD(P)H-quinone oxidoreductase chain 4, chloroplastic (506 aa).

Helical transmembrane passes span 5–25 (FPLLTFITLFPISAGLLIPFL), 35–55 (WYTLIICLIDFVITSYIFIYK), 88–108 (MPLILLTSFITTLATLSAWPI), 114–134 (LFYFLMLAMYSGQLGVFLSQD), 135–155 (ILLFFLMWELELIPIYLLLSL), 168–188 (FILYTAVGSIFILMAGLTMAF), 209–229 (ALEIVLYLGFLIAFAVKLPAF), 243–263 (HYSTCMLLAGILIKMGGYGLI), 275–295 (VIFSPWIALIGGIQIIYGALT), 309–329 (SSISHMGFVMIGISSFTDLGL), 331–351 (GAMMQMVSHGLIGAGLFFLAG), 386–406 (SLALPGMSGFVAELMVFLGFL), 415–435 (FIALITFLEAVGIILTPIYLL), and 463–483 (IFIMSCLFLPIIGIGIYPNLT).

The protein belongs to the complex I subunit 4 family.

Its subcellular location is the plastid. The protein resides in the chloroplast thylakoid membrane. The catalysed reaction is a plastoquinone + NADH + (n+1) H(+)(in) = a plastoquinol + NAD(+) + n H(+)(out). It carries out the reaction a plastoquinone + NADPH + (n+1) H(+)(in) = a plastoquinol + NADP(+) + n H(+)(out). The chain is NAD(P)H-quinone oxidoreductase chain 4, chloroplastic from Chaetosphaeridium globosum (Charophycean green alga).